The primary structure comprises 254 residues: 4-hydroxy-tetrahydrodipicolinate reductase (254 aa).

NAD(+) is bound at residue 7–12; the sequence is GASGRI. Arginine 35 is an NADP(+) binding site. NAD(+)-binding positions include 91–93 and 115–118; these read GTT and AHNM. Histidine 147 (proton donor/acceptor) is an active-site residue. Histidine 148 contacts (S)-2,3,4,5-tetrahydrodipicolinate. Lysine 151 functions as the Proton donor in the catalytic mechanism. 157–158 lines the (S)-2,3,4,5-tetrahydrodipicolinate pocket; sequence GT.

The protein belongs to the DapB family.

Its subcellular location is the cytoplasm. The catalysed reaction is (S)-2,3,4,5-tetrahydrodipicolinate + NAD(+) + H2O = (2S,4S)-4-hydroxy-2,3,4,5-tetrahydrodipicolinate + NADH + H(+). The enzyme catalyses (S)-2,3,4,5-tetrahydrodipicolinate + NADP(+) + H2O = (2S,4S)-4-hydroxy-2,3,4,5-tetrahydrodipicolinate + NADPH + H(+). It participates in amino-acid biosynthesis; L-lysine biosynthesis via DAP pathway; (S)-tetrahydrodipicolinate from L-aspartate: step 4/4. Its function is as follows. Catalyzes the conversion of 4-hydroxy-tetrahydrodipicolinate (HTPA) to tetrahydrodipicolinate. The polypeptide is 4-hydroxy-tetrahydrodipicolinate reductase (Helicobacter pylori (strain HPAG1)).